The chain runs to 404 residues: Trigger factor (404 aa).

In terms of domain architecture, PPIase FKBP-type spans 160–225 (KDHLFVRTEE…VLEVKTLKLP (66 aa)).

This sequence belongs to the FKBP-type PPIase family. Tig subfamily.

It is found in the cytoplasm. It carries out the reaction [protein]-peptidylproline (omega=180) = [protein]-peptidylproline (omega=0). Its function is as follows. Involved in protein export. Acts as a chaperone by maintaining the newly synthesized protein in an open conformation. Functions as a peptidyl-prolyl cis-trans isomerase. In Thermus thermophilus (strain ATCC BAA-163 / DSM 7039 / HB27), this protein is Trigger factor.